Here is a 354-residue protein sequence, read N- to C-terminus: UPF0597 protein PPA0217 (354 aa).

The protein belongs to the UPF0597 family.

The chain is UPF0597 protein PPA0217 from Cutibacterium acnes (strain DSM 16379 / KPA171202) (Propionibacterium acnes).